A 192-amino-acid polypeptide reads, in one-letter code: Peptide deformylase 1 (192 aa).

Cys101 and His143 together coordinate Fe cation. Residue Glu144 is part of the active site. His147 lines the Fe cation pocket.

It belongs to the polypeptide deformylase family. The cofactor is Fe(2+).

It carries out the reaction N-terminal N-formyl-L-methionyl-[peptide] + H2O = N-terminal L-methionyl-[peptide] + formate. Functionally, removes the formyl group from the N-terminal Met of newly synthesized proteins. Requires at least a dipeptide for an efficient rate of reaction. N-terminal L-methionine is a prerequisite for activity but the enzyme has broad specificity at other positions. The protein is Peptide deformylase 1 of Prochlorococcus marinus (strain MIT 9313).